The following is a 253-amino-acid chain: Transcription factor bHLH106 (253 aa).

Residues 66-115 (AALRNHKEAERRRRERINSHLNKLRNVLSCNSKTDKATLLAKVVQRVREL) form the bHLH domain.

As to quaternary structure, homodimer.

It is found in the nucleus. This chain is Transcription factor bHLH106 (BHLH106), found in Arabidopsis thaliana (Mouse-ear cress).